Consider the following 200-residue polypeptide: Probable nicotinate-nucleotide adenylyltransferase (200 aa).

Belongs to the NadD family.

The catalysed reaction is nicotinate beta-D-ribonucleotide + ATP + H(+) = deamido-NAD(+) + diphosphate. Its pathway is cofactor biosynthesis; NAD(+) biosynthesis; deamido-NAD(+) from nicotinate D-ribonucleotide: step 1/1. In terms of biological role, catalyzes the reversible adenylation of nicotinate mononucleotide (NaMN) to nicotinic acid adenine dinucleotide (NaAD). The chain is Probable nicotinate-nucleotide adenylyltransferase from Clostridium botulinum (strain Alaska E43 / Type E3).